The chain runs to 129 residues: Glycine cleavage system H protein (129 aa).

In terms of domain architecture, Lipoyl-binding spans 24 to 106 (LLKIGVSEFA…IGEGWLVILK (83 aa)). The residue at position 65 (K65) is an N6-lipoyllysine.

This sequence belongs to the GcvH family. In terms of assembly, the glycine cleavage system is composed of four proteins: P, T, L and H. Requires (R)-lipoate as cofactor.

In terms of biological role, the glycine cleavage system catalyzes the degradation of glycine. The H protein shuttles the methylamine group of glycine from the P protein to the T protein. This chain is Glycine cleavage system H protein, found in Prochlorococcus marinus (strain MIT 9312).